The chain runs to 82 residues: Cytochrome c oxidase subunit 8, mitochondrial (82 aa).

Residues 1–31 (MFSRVALRAAPRQQPFSLVARRTFQTTRAQL) constitute a mitochondrion transit peptide. Topologically, residues 32-52 (SSPYHYPEGPRSNLPFNPKTR) are mitochondrial matrix. A helical membrane pass occupies residues 53–75 (FFWFRYLMYCVVGFGSPVAIAVW). Over 76-82 (QTYRPRS) the chain is Mitochondrial intermembrane.

The protein belongs to the cytochrome c oxidase VIIc family. Component of the cytochrome c oxidase (complex IV, CIV), a multisubunit enzyme composed of 11 subunits. The complex is composed of a catalytic core of 3 subunits Cox1, Cox2 and Cox3, encoded in the mitochondrial DNA, and 8 supernumerary subunits Cox4, Cox5a/Cox5, Cox6, Cox7, Cox8, Cox7a/Cox9, Cox6b/Cox12 and Cox6a/Cox13, which are encoded in the nuclear genome. The complex exists as a monomer or a dimer and forms respiratory supercomplexes (SCs) in the inner mitochondrial membrane with NADH-ubiquinone oxidoreductase (complex I, CI) and ubiquinol-cytochrome c oxidoreductase (cytochrome b-c1 complex, complex III, CIII), resulting in various different assemblies (supercomplexes I(1)IV(1), I(1)III(3)IV(2), III(2)IV(1) and III(2)IV(2) as well as larger supercomplexes of compositions like I(1)III(2)IV(5-6)).

It is found in the mitochondrion inner membrane. The protein operates within energy metabolism; oxidative phosphorylation. In terms of biological role, component of the cytochrome c oxidase, the last enzyme in the mitochondrial electron transport chain which drives oxidative phosphorylation. The respiratory chain contains 3 multisubunit complexes succinate dehydrogenase (complex II, CII), ubiquinol-cytochrome c oxidoreductase (cytochrome b-c1 complex, complex III, CIII) and cytochrome c oxidase (complex IV, CIV), that cooperate to transfer electrons derived from NADH and succinate to molecular oxygen, creating an electrochemical gradient over the inner membrane that drives transmembrane transport and the ATP synthase. Cytochrome c oxidase is the component of the respiratory chain that catalyzes the reduction of oxygen to water. Electrons originating from reduced cytochrome c in the intermembrane space (IMS) are transferred via the dinuclear copper A center (CU(A)) of Cox2 and heme A of Cox1 to the active site in Cox1, a binuclear center (BNC) formed by heme A3 and copper B (CU(B)). The BNC reduces molecular oxygen to 2 water molecules using 4 electrons from cytochrome c in the IMS and 4 protons from the mitochondrial matrix. This is Cytochrome c oxidase subunit 8, mitochondrial (cox-15) from Neurospora crassa (strain ATCC 24698 / 74-OR23-1A / CBS 708.71 / DSM 1257 / FGSC 987).